A 126-amino-acid chain; its full sequence is Late histone H2A.L3 (126 aa).

The segment at 1–20 is disordered; that stretch reads MSGRGKGAGKARAKAKSRSA. Serine 2 is modified (N-acetylserine). The residue at position 2 (serine 2) is a Phosphoserine. Residues 7–19 show a composition bias toward basic residues; sequence GAGKARAKAKSRS. The residue at position 105 (glutamine 105) is an N5-methylglutamine. Residue lysine 120 forms a Glycyl lysine isopeptide (Lys-Gly) (interchain with G-Cter in ubiquitin) linkage.

This sequence belongs to the histone H2A family. In terms of assembly, the nucleosome is a histone octamer containing two molecules each of H2A, H2B, H3 and H4 assembled in one H3-H4 heterotetramer and two H2A-H2B heterodimers. The octamer wraps approximately 147 bp of DNA. In terms of processing, monoubiquitination of Lys-120 gives a specific tag for epigenetic transcriptional repression. Post-translationally, phosphorylation of Ser-2 directly represses transcription.

The protein localises to the nucleus. It is found in the chromosome. Its function is as follows. Core component of nucleosome. Nucleosomes wrap and compact DNA into chromatin, limiting DNA accessibility to the cellular machineries which require DNA as a template. Histones thereby play a central role in transcription regulation, DNA repair, DNA replication and chromosomal stability. DNA accessibility is regulated via a complex set of post-translational modifications of histones, also called histone code, and nucleosome remodeling. The polypeptide is Late histone H2A.L3 (Strongylocentrotus purpuratus (Purple sea urchin)).